The primary structure comprises 849 residues: Envelope glycoprotein gp160 (849 aa).

The N-terminal stretch at 1–31 (MRVKGIQRNWQHLWKWGTLILGLVIICSASD) is a signal peptide. Topologically, residues 32 to 670 (NLWVTVYYGV…ISNWLWYIRI (639 aa)) are extracellular. The cysteines at positions 53 and 73 are disulfide-linked. Asparagine 87, asparagine 129, asparagine 137, asparagine 142, asparagine 153, asparagine 185, asparagine 195, asparagine 232, asparagine 239, asparagine 260, asparagine 274, asparagine 287, asparagine 299, asparagine 329, asparagine 341, asparagine 354, and asparagine 358 each carry an N-linked (GlcNAc...) asparagine; by host glycan. Cystine bridges form between cysteine 118–cysteine 203, cysteine 125–cysteine 194, cysteine 130–cysteine 154, cysteine 216–cysteine 245, and cysteine 226–cysteine 237. The segment at 130 to 153 (CTNVNSANHTEANNTVENKEEIKN) is V1. Residues 154–194 (CSFKITTERGGKKKEEYALFYKLDVVPISNGNKTSYRLIHC) form a V2 region. The segment at 294 to 327 (CIRPNNNTRKSIPIGPGQAFYATGDIIGDIRQAH) is V3. Cysteine 294 and cysteine 328 form a disulfide bridge. Positions 360–370 (SAGGDLEITTH) are CD4-binding loop. 2 disulfides stabilise this stretch: cysteine 374-cysteine 430 and cysteine 381-cysteine 403. A V4 region spans residues 381–403 (CNTSGLFNNNISNINNETITLPC). N-linked (GlcNAc...) asparagine; by host glycans are attached at residues asparagine 382, asparagine 390, asparagine 396, asparagine 433, and asparagine 447. V5 stretches follow at residues 446–457 (NNDSTEETFRPG) and 448–457 (DSTEETFRPG). Residues 498 to 518 (AVGLGAVFLGFLGAAGSTMGA) are fusion peptide. The tract at residues 560 to 578 (KQLQSRVLAIERYLKDQQL) is immunosuppression. Cysteine 584 and cysteine 590 are joined by a disulfide. N-linked (GlcNAc...) asparagine; by host glycosylation is found at asparagine 597, asparagine 602, asparagine 611, and asparagine 623. Residues 619–653 (REIHNYTQHIYSLIEESQNQQEKNEQDLLALDKWA) adopt a coiled-coil conformation. An MPER; binding to GalCer region spans residues 648–669 (ALDKWASLWNWFDISNWLWYIR). A helical transmembrane segment spans residues 671-691 (FIMIVGGLIGLRIVFAVLSIV). Residues 692-849 (NRVRQGYSPL…IRQGLERALL (158 aa)) lie on the Cytoplasmic side of the membrane. Positions 698-701 (YSPL) match the YXXL motif; contains endocytosis signal motif. Residues 709–729 (HQREPDRLGKTEEGGGEQDRD) are disordered. Cysteine 750 carries S-palmitoyl cysteine; by host lipidation. The Di-leucine internalization motif motif lies at 848–849 (LL).

The protein belongs to the HIV-1 env protein family. The mature envelope protein (Env) consists of a homotrimer of non-covalently associated gp120-gp41 heterodimers. The resulting complex protrudes from the virus surface as a spike. There seems to be as few as 10 spikes on the average virion. Interacts with host CD4, CCR5 and CXCR4. Gp120 also interacts with the C-type lectins CD209/DC-SIGN and CLEC4M/DC-SIGNR (collectively referred to as DC-SIGN(R)). Gp120 and gp41 interact with GalCer. Gp120 interacts with host ITGA4/ITGB7 complex; on CD4+ T-cells, this interaction results in rapid activation of integrin ITGAL/LFA-1, which facilitates efficient cell-to-cell spreading of HIV-1. Gp120 interacts with cell-associated heparan sulfate; this interaction increases virus infectivity on permissive cells and may be involved in infection of CD4- cells. As to quaternary structure, the mature envelope protein (Env) consists of a homotrimer of non-covalently associated gp120-gp41 heterodimers. The resulting complex protrudes from the virus surface as a spike. There seems to be as few as 10 spikes on the average virion. Post-translationally, highly glycosylated by host. The high number of glycan on the protein is reffered to as 'glycan shield' because it contributes to hide protein sequence from adaptive immune system. Palmitoylation of the transmembrane protein and of Env polyprotein (prior to its proteolytic cleavage) is essential for their association with host cell membrane lipid rafts. Palmitoylation is therefore required for envelope trafficking to classical lipid rafts, but not for viral replication. In terms of processing, specific enzymatic cleavages in vivo yield mature proteins. Envelope glycoproteins are synthesized as an inactive precursor that is heavily N-glycosylated and processed likely by host cell furin in the Golgi to yield the mature SU and TM proteins. The cleavage site between SU and TM requires the minimal sequence [KR]-X-[KR]-R. About 2 of the 9 disulfide bonds of gp41 are reduced by P4HB/PDI, following binding to CD4 receptor.

The protein resides in the virion membrane. It localises to the host cell membrane. Its subcellular location is the host endosome membrane. Its function is as follows. Oligomerizes in the host endoplasmic reticulum into predominantly trimers. In a second time, gp160 transits in the host Golgi, where glycosylation is completed. The precursor is then proteolytically cleaved in the trans-Golgi and thereby activated by cellular furin or furin-like proteases to produce gp120 and gp41. Functionally, attaches the virus to the host lymphoid cell by binding to the primary receptor CD4. This interaction induces a structural rearrangement creating a high affinity binding site for a chemokine coreceptor like CXCR4 and/or CCR5. Acts as a ligand for CD209/DC-SIGN and CLEC4M/DC-SIGNR, which are respectively found on dendritic cells (DCs), and on endothelial cells of liver sinusoids and lymph node sinuses. These interactions allow capture of viral particles at mucosal surfaces by these cells and subsequent transmission to permissive cells. HIV subverts the migration properties of dendritic cells to gain access to CD4+ T-cells in lymph nodes. Virus transmission to permissive T-cells occurs either in trans (without DCs infection, through viral capture and transmission), or in cis (following DCs productive infection, through the usual CD4-gp120 interaction), thereby inducing a robust infection. In trans infection, bound virions remain infectious over days and it is proposed that they are not degraded, but protected in non-lysosomal acidic organelles within the DCs close to the cell membrane thus contributing to the viral infectious potential during DCs' migration from the periphery to the lymphoid tissues. On arrival at lymphoid tissues, intact virions recycle back to DCs' cell surface allowing virus transmission to CD4+ T-cells. Acts as a class I viral fusion protein. Under the current model, the protein has at least 3 conformational states: pre-fusion native state, pre-hairpin intermediate state, and post-fusion hairpin state. During fusion of viral and target intracellular membranes, the coiled coil regions (heptad repeats) assume a trimer-of-hairpins structure, positioning the fusion peptide in close proximity to the C-terminal region of the ectodomain. The formation of this structure appears to drive apposition and subsequent fusion of viral and target cell membranes. Complete fusion occurs in host cell endosomes and is dynamin-dependent, however some lipid transfer might occur at the plasma membrane. The virus undergoes clathrin-dependent internalization long before endosomal fusion, thus minimizing the surface exposure of conserved viral epitopes during fusion and reducing the efficacy of inhibitors targeting these epitopes. Membranes fusion leads to delivery of the nucleocapsid into the cytoplasm. The sequence is that of Envelope glycoprotein gp160 from Human immunodeficiency virus type 1 group M subtype G (isolate 92NG083) (HIV-1).